The chain runs to 331 residues: Ornithine carbamoyltransferase (331 aa).

Carbamoyl phosphate-binding positions include 55 to 58 (STRT), glutamine 82, arginine 106, and 133 to 136 (HPTQ). L-ornithine is bound by residues asparagine 166, aspartate 230, and 234–235 (SM). Residues 272-273 (CL) and arginine 317 contribute to the carbamoyl phosphate site.

Belongs to the aspartate/ornithine carbamoyltransferase superfamily. OTCase family.

The protein resides in the cytoplasm. The enzyme catalyses carbamoyl phosphate + L-ornithine = L-citrulline + phosphate + H(+). It functions in the pathway amino-acid biosynthesis; L-arginine biosynthesis; L-arginine from L-ornithine and carbamoyl phosphate: step 1/3. In terms of biological role, reversibly catalyzes the transfer of the carbamoyl group from carbamoyl phosphate (CP) to the N(epsilon) atom of ornithine (ORN) to produce L-citrulline. In Neisseria gonorrhoeae, this protein is Ornithine carbamoyltransferase (argF).